The sequence spans 232 residues: Protein G1-like3 (232 aa).

Disordered stretches follow at residues 20–77 and 189–232; these read AGLL…YEAQ and ARAR…GAAC. Positions 38–53 are enriched in gly residues; sequence AGGGGGGGGDGAGGSS. The 128-residue stretch at 73–200 folds into the ALOG domain; sequence RYEAQKRRDW…ARGVSYEKKK (128 aa). A Nuclear localization signal motif is present at residues 198-202; it reads KKKRK. Positions 216-232 are enriched in pro residues; it reads PHPPPPPPPPPSAGAAC.

Belongs to the plant homeotic and developmental regulators ALOG protein family.

The protein localises to the nucleus. Probable transcription regulator that acts as a developmental regulator by promoting cell growth in response to light. This Oryza sativa subsp. indica (Rice) protein is Protein G1-like3.